We begin with the raw amino-acid sequence, 127 residues long: MMSYLIVFFGAGIGGMARHMVNLTAMRWGLTEFPFGTLFINMLGSFLIGAVVETFALKAGLPQHWRLFLTTGILGGFTTFSAFSLETVLLYERGKVFLAASYAVASVTLSVGALLLALHLVRTLIRG.

4 consecutive transmembrane segments (helical) span residues 1-21, 32-52, 71-91, and 96-116; these read MMSY…RHMV, EFPF…GAVV, TGIL…VLLY, and VFLA…ALLL. Positions 75 and 78 each coordinate Na(+).

The protein belongs to the fluoride channel Fluc/FEX (TC 1.A.43) family.

It is found in the cell inner membrane. It catalyses the reaction fluoride(in) = fluoride(out). Its activity is regulated as follows. Na(+) is not transported, but it plays an essential structural role and its presence is essential for fluoride channel function. Its function is as follows. Fluoride-specific ion channel. Important for reducing fluoride concentration in the cell, thus reducing its toxicity. This Granulibacter bethesdensis (strain ATCC BAA-1260 / CGDNIH1) protein is Fluoride-specific ion channel FluC.